The primary structure comprises 94 residues: Protein RESPONSE TO LOW SULFUR 2 (94 aa).

A coiled-coil region spans residues 15-63 (VDELRRKNGEMEKAVEEMKKEMLQLWRRTQVAEEAEERLCSQLAELEAE).

Its function is as follows. May be involved in defense responses monitoring. Probably implicated into osmotic stress signaling. In Arabidopsis thaliana (Mouse-ear cress), this protein is Protein RESPONSE TO LOW SULFUR 2.